Consider the following 446-residue polypeptide: Glutamyl-tRNA reductase 2 (446 aa).

Residues 53–56 (TCNR), Ser-105, 110–112 (EQQ), and Gln-116 each bind substrate. Cys-54 serves as the catalytic Nucleophile. 185 to 190 (GAGKMG) is an NADP(+) binding site. The tract at residues 409–446 (AAELFGIENETAGGERREGGAEGAAAAPGAGPVRSQGT) is disordered. Residues 431–440 (GAAAAPGAGP) show a composition bias toward low complexity.

The protein belongs to the glutamyl-tRNA reductase family. As to quaternary structure, homodimer.

It catalyses the reaction (S)-4-amino-5-oxopentanoate + tRNA(Glu) + NADP(+) = L-glutamyl-tRNA(Glu) + NADPH + H(+). The protein operates within porphyrin-containing compound metabolism; protoporphyrin-IX biosynthesis; 5-aminolevulinate from L-glutamyl-tRNA(Glu): step 1/2. Catalyzes the NADPH-dependent reduction of glutamyl-tRNA(Glu) to glutamate 1-semialdehyde (GSA). This chain is Glutamyl-tRNA reductase 2, found in Anaeromyxobacter dehalogenans (strain 2CP-C).